The primary structure comprises 207 residues: NADH-quinone oxidoreductase subunit C (207 aa).

Belongs to the complex I 30 kDa subunit family. As to quaternary structure, NDH-1 is composed of 14 different subunits. Subunits NuoB, C, D, E, F, and G constitute the peripheral sector of the complex.

The protein localises to the cell inner membrane. The enzyme catalyses a quinone + NADH + 5 H(+)(in) = a quinol + NAD(+) + 4 H(+)(out). Its function is as follows. NDH-1 shuttles electrons from NADH, via FMN and iron-sulfur (Fe-S) centers, to quinones in the respiratory chain. The immediate electron acceptor for the enzyme in this species is believed to be ubiquinone. Couples the redox reaction to proton translocation (for every two electrons transferred, four hydrogen ions are translocated across the cytoplasmic membrane), and thus conserves the redox energy in a proton gradient. In Rickettsia felis (strain ATCC VR-1525 / URRWXCal2) (Rickettsia azadi), this protein is NADH-quinone oxidoreductase subunit C.